Reading from the N-terminus, the 205-residue chain is MKLRGLYAITDSQLLSGKFLSYVEAALDGGVTLLQYRDKTSDESRRLREATELLKLCERYKTRLIINDDAELAARLGVGVHLGQTDGSLPDARALLGHKAIVGATCHGSLELAEQAKADGATYVAFGRFFNSLTKPGAPAVPLDLIAQVRARVHLPIAVIGGITLENAPQLVEHGADLLAVVHGLFGAENAQEVTRRAKAFMALL.

4-amino-2-methyl-5-(diphosphooxymethyl)pyrimidine-binding positions include 35–39 and asparagine 67; that span reads QYRDK. Positions 68 and 86 each coordinate Mg(2+). Threonine 105 serves as a coordination point for 4-amino-2-methyl-5-(diphosphooxymethyl)pyrimidine. A 2-[(2R,5Z)-2-carboxy-4-methylthiazol-5(2H)-ylidene]ethyl phosphate-binding site is contributed by 132–134; it reads SLT. Lysine 135 contributes to the 4-amino-2-methyl-5-(diphosphooxymethyl)pyrimidine binding site. A 2-[(2R,5Z)-2-carboxy-4-methylthiazol-5(2H)-ylidene]ethyl phosphate-binding site is contributed by glycine 162.

This sequence belongs to the thiamine-phosphate synthase family. Mg(2+) serves as cofactor.

The enzyme catalyses 2-[(2R,5Z)-2-carboxy-4-methylthiazol-5(2H)-ylidene]ethyl phosphate + 4-amino-2-methyl-5-(diphosphooxymethyl)pyrimidine + 2 H(+) = thiamine phosphate + CO2 + diphosphate. It carries out the reaction 2-(2-carboxy-4-methylthiazol-5-yl)ethyl phosphate + 4-amino-2-methyl-5-(diphosphooxymethyl)pyrimidine + 2 H(+) = thiamine phosphate + CO2 + diphosphate. It catalyses the reaction 4-methyl-5-(2-phosphooxyethyl)-thiazole + 4-amino-2-methyl-5-(diphosphooxymethyl)pyrimidine + H(+) = thiamine phosphate + diphosphate. It functions in the pathway cofactor biosynthesis; thiamine diphosphate biosynthesis; thiamine phosphate from 4-amino-2-methyl-5-diphosphomethylpyrimidine and 4-methyl-5-(2-phosphoethyl)-thiazole: step 1/1. Its function is as follows. Condenses 4-methyl-5-(beta-hydroxyethyl)thiazole monophosphate (THZ-P) and 2-methyl-4-amino-5-hydroxymethyl pyrimidine pyrophosphate (HMP-PP) to form thiamine monophosphate (TMP). The protein is Thiamine-phosphate synthase of Pseudomonas savastanoi pv. phaseolicola (strain 1448A / Race 6) (Pseudomonas syringae pv. phaseolicola (strain 1448A / Race 6)).